A 30-amino-acid chain; its full sequence is ATP-dependent Clp protease ATP-binding subunit ClpA homolog (30 aa).

The protein belongs to the ClpA/ClpB family.

The protein localises to the plastid. It is found in the chloroplast. Its function is as follows. May interact with a ClpP-like protease involved in degradation of denatured proteins in the chloroplast. This Pinus pinaster (Maritime pine) protein is ATP-dependent Clp protease ATP-binding subunit ClpA homolog.